The chain runs to 156 residues: Arginine repressor (156 aa).

This sequence belongs to the ArgR family.

The protein localises to the cytoplasm. Its pathway is amino-acid biosynthesis; L-arginine biosynthesis [regulation]. Regulates arginine biosynthesis genes. The protein is Arginine repressor of Yersinia pseudotuberculosis serotype I (strain IP32953).